The chain runs to 278 residues: MSKPTDQLYYANGVDSYIAETHAWRTPETCSTYMLKYVKKTDRILDVGCGPGTITVGFPKYVPEGEVIGVEPSQELLDKAEEALRKEETLKKEKINNCSFRLGSIYKLPFPDNTFDIVNTHQVLVHLQDPVAALVELKRVTKPGGYVCCKEADLLSACVYPKEYEHDLLLQSQARINLHGTNPTAGRSLRGWAIDAKYVAENIHSSASTWCFADEETRKWVSRLFIQRVLHSNERLDDDDAKDQSLRKRVAEAWQRWKEDSRGCFFMTDGQIVYKKEE.

The protein localises to the cytoplasm. It is found in the nucleus. In terms of biological role, probable methyltransferase. This is an uncharacterized protein from Schizosaccharomyces pombe (strain 972 / ATCC 24843) (Fission yeast).